The sequence spans 887 residues: Valine--tRNA ligase (887 aa).

Residues 47–57 (PNVTGALHMGH) carry the 'HIGH' region motif. The 'KMSKS' region signature appears at 527-531 (KMSKS). Lys530 is an ATP binding site. The stretch at 817-885 (LVNVEEEEKR…LLASLEKIRK (69 aa)) forms a coiled coil.

It belongs to the class-I aminoacyl-tRNA synthetase family. ValS type 1 subfamily. Monomer.

Its subcellular location is the cytoplasm. The enzyme catalyses tRNA(Val) + L-valine + ATP = L-valyl-tRNA(Val) + AMP + diphosphate. Its function is as follows. Catalyzes the attachment of valine to tRNA(Val). As ValRS can inadvertently accommodate and process structurally similar amino acids such as threonine, to avoid such errors, it has a 'posttransfer' editing activity that hydrolyzes mischarged Thr-tRNA(Val) in a tRNA-dependent manner. This chain is Valine--tRNA ligase, found in Geobacter sulfurreducens (strain ATCC 51573 / DSM 12127 / PCA).